The chain runs to 219 residues: Probable N-acetyltransferase camello (219 aa).

Transmembrane regions (helical) follow at residues 44–64 and 66–86; these read FITF…VLAL and SLVA…HGLA. Residues 62 to 211 form the N-acetyltransferase domain; sequence LALTSLVALL…VHQYTSFTVA (150 aa).

This sequence belongs to the camello family.

It is found in the golgi apparatus membrane. Plays a role in regulation of gastrulation, possibly by controlled reduction of cell adhesion in the periblastopore region which is necessary for optimal cell motility. The chain is Probable N-acetyltransferase camello from Xenopus tropicalis (Western clawed frog).